Reading from the N-terminus, the 435-residue chain is Tol-Pal system protein TolB (435 aa).

The N-terminal stretch at 1–28 (MVKCSLIRALMVIAGLIGAAAFTTPANA) is a signal peptide. The tract at residues 288–310 (STAAIDTSPSYSPDGARVSFESD) is disordered.

It belongs to the TolB family. In terms of assembly, the Tol-Pal system is composed of five core proteins: the inner membrane proteins TolA, TolQ and TolR, the periplasmic protein TolB and the outer membrane protein Pal. They form a network linking the inner and outer membranes and the peptidoglycan layer.

It is found in the periplasm. Part of the Tol-Pal system, which plays a role in outer membrane invagination during cell division and is important for maintaining outer membrane integrity. The protein is Tol-Pal system protein TolB of Rhizobium leguminosarum bv. trifolii (strain WSM2304).